The primary structure comprises 307 residues: Ribosomal RNA small subunit methyltransferase H (307 aa).

Residues 32–34, D52, F78, D99, and Q106 contribute to the S-adenosyl-L-methionine site; that span reads GGH.

Belongs to the methyltransferase superfamily. RsmH family.

Its subcellular location is the cytoplasm. The catalysed reaction is cytidine(1402) in 16S rRNA + S-adenosyl-L-methionine = N(4)-methylcytidine(1402) in 16S rRNA + S-adenosyl-L-homocysteine + H(+). Its function is as follows. Specifically methylates the N4 position of cytidine in position 1402 (C1402) of 16S rRNA. The protein is Ribosomal RNA small subunit methyltransferase H of Acinetobacter baumannii (strain AB307-0294).